A 192-amino-acid chain; its full sequence is MKLVFASNNKNKIAEIQSMLPESITILSLEDINCFEDIPETADTIEGNAILKADYVTQKYGYDCFADDTGLEVDAINGEPGVYSARYAGEQKNADDNMNKLLKALENNKNRSAQFKTVITLNLEGKQYIFTGIAKGEITETKTGTNGFGYDPIFKPENFDKTFAELPLEIKNTIGHRGKAVQQLIDLLTATK.

Residue 7 to 12 (SNNKNK) coordinates substrate. Catalysis depends on Asp-68, which acts as the Proton acceptor. Asp-68 contributes to the Mg(2+) binding site. Substrate-binding positions include Thr-69, 148–151 (FGYD), Lys-171, and 176–177 (HR).

Belongs to the HAM1 NTPase family. In terms of assembly, homodimer. The cofactor is Mg(2+).

The enzyme catalyses XTP + H2O = XMP + diphosphate + H(+). The catalysed reaction is dITP + H2O = dIMP + diphosphate + H(+). It catalyses the reaction ITP + H2O = IMP + diphosphate + H(+). Functionally, pyrophosphatase that catalyzes the hydrolysis of nucleoside triphosphates to their monophosphate derivatives, with a high preference for the non-canonical purine nucleotides XTP (xanthosine triphosphate), dITP (deoxyinosine triphosphate) and ITP. Seems to function as a house-cleaning enzyme that removes non-canonical purine nucleotides from the nucleotide pool, thus preventing their incorporation into DNA/RNA and avoiding chromosomal lesions. The sequence is that of dITP/XTP pyrophosphatase from Flavobacterium johnsoniae (strain ATCC 17061 / DSM 2064 / JCM 8514 / BCRC 14874 / CCUG 350202 / NBRC 14942 / NCIMB 11054 / UW101) (Cytophaga johnsonae).